The sequence spans 361 residues: S-adenosylmethionine:tRNA ribosyltransferase-isomerase (361 aa).

Belongs to the QueA family. Monomer.

The protein resides in the cytoplasm. It carries out the reaction 7-aminomethyl-7-carbaguanosine(34) in tRNA + S-adenosyl-L-methionine = epoxyqueuosine(34) in tRNA + adenine + L-methionine + 2 H(+). It functions in the pathway tRNA modification; tRNA-queuosine biosynthesis. In terms of biological role, transfers and isomerizes the ribose moiety from AdoMet to the 7-aminomethyl group of 7-deazaguanine (preQ1-tRNA) to give epoxyqueuosine (oQ-tRNA). The sequence is that of S-adenosylmethionine:tRNA ribosyltransferase-isomerase from Rhizobium etli (strain ATCC 51251 / DSM 11541 / JCM 21823 / NBRC 15573 / CFN 42).